The primary structure comprises 209 residues: Small ribosomal subunit protein uS3 (209 aa).

In terms of domain architecture, KH type-2 spans Ile38 to Lys107.

Belongs to the universal ribosomal protein uS3 family. In terms of assembly, part of the 30S ribosomal subunit. Forms a tight complex with proteins S10 and S14.

In terms of biological role, binds the lower part of the 30S subunit head. Binds mRNA in the 70S ribosome, positioning it for translation. The polypeptide is Small ribosomal subunit protein uS3 (Pseudothermotoga lettingae (strain ATCC BAA-301 / DSM 14385 / NBRC 107922 / TMO) (Thermotoga lettingae)).